The following is a 171-amino-acid chain: Protein phosphatase 1 regulatory subunit 1A (171 aa).

Met1 carries the post-translational modification N-acetylmethionine. The segment at Met1–Val171 is disordered. The essential for activity stretch occupies residues Lys9–Phe12. Residues Pro19–Ile29 are compositionally biased toward basic and acidic residues. Thr35 carries the post-translational modification Phosphothreonine; by PKA. Residues Thr42–Arg54 are essential for activity. Phosphoserine is present on residues Ser43, Ser46, Ser47, and Ser67. Residues Lys135–Ser157 show a composition bias toward basic and acidic residues. Residues Thr143–Val171 are interaction with PPP1R15A.

It belongs to the protein phosphatase inhibitor 1 family. In terms of assembly, interacts with PPP1R15A. Post-translationally, phosphorylation of Thr-35 is required for activity.

Functionally, inhibitor of protein-phosphatase 1. This protein may be important in hormonal control of glycogen metabolism. Hormones that elevate intracellular cAMP increase I-1 activity in many tissues. I-1 activation may impose cAMP control over proteins that are not directly phosphorylated by PKA. Following a rise in intracellular calcium, I-1 is inactivated by calcineurin (or PP2B). Does not inhibit type-2 phosphatases. The polypeptide is Protein phosphatase 1 regulatory subunit 1A (PPP1R1A) (Homo sapiens (Human)).